Consider the following 283-residue polypeptide: Alkaline ceramidase (283 aa).

5 residues coordinate Ca(2+): Asp28, Trp29, Glu31, Asn33, and Glu42. Helical transmembrane passes span 43 to 63 and 69 to 89; these read FVNT…IMLF and FVTP…LSSM. His92 contributes to the Zn(2+) binding site. 4 helical membrane passes run 98 to 118, 134 to 151, 154 to 174, and 187 to 209; these read IGQL…FSLF, TFSW…GLSW, PIVN…MLYT, and LGIR…RIFC. The Zn(2+) site is built by His221 and His225. The chain crosses the membrane as a helical span at residues 222-242; sequence GFWHIFIFIAAYTVLVLFAYF.

The protein belongs to the alkaline ceramidase family. Zn(2+) is required as a cofactor. In terms of tissue distribution, expressed in the central midgut of late embryos. In brain, it is present at the interhemispheric junction and in groups of cells in the central brain.

It localises to the membrane. The catalysed reaction is an N-acylsphing-4-enine + H2O = sphing-4-enine + a fatty acid. Hydrolyzes the sphingolipid ceramide into sphingosine and free fatty acid. The chain is Alkaline ceramidase (bwa) from Drosophila melanogaster (Fruit fly).